Reading from the N-terminus, the 407-residue chain is DAZ-associated protein 1 (407 aa).

The residue at position 1 (Met-1) is an N-acetylmethionine. RRM domains are found at residues 10-97 and 113-190; these read GKLF…RTRP and NKIF…RAEP. The segment at 74–117 is disordered; sequence TLDGRNIDPKPCTPRGMQPERTRPKEGWQKGPRSDNSKSNKIFV. Over residues 91 to 111 the composition is skewed to basic and acidic residues; that stretch reads QPERTRPKEGWQKGPRSDNSK. N6-acetyllysine is present on Lys-150. The span at 185 to 194 shows a compositional bias: basic and acidic residues; sequence VKRAEPRDSK. A disordered region spans residues 185 to 407; sequence VKRAEPRDSK…NVQGFHPYRR (223 aa). Over residues 195-207 the composition is skewed to polar residues; the sequence is SQAPGQPGASQWG. Pro residues predominate over residues 247 to 262; sequence GPPPAGRGAPPPPPPF. Arg-253 is modified (omega-N-methylarginine). The span at 280 to 294 shows a compositional bias: low complexity; sequence FPQGYGAPPQFSFGY. Residues 295–315 are compositionally biased toward pro residues; sequence GPPPPPPDQFAPPGVPPPPAT. Positions 364 to 379 are enriched in low complexity; sequence SDPSQQPPSYGGPSVP. A compositionally biased stretch (gly residues) spans 380 to 393; the sequence is GSGGPPAGGSGFGR.

As to quaternary structure, interacts with DAZ and DAZL. Post-translationally, acetylation at Lys-150 is predominantly observed in the nuclear fraction, and may regulate nucleocytoplasmic transport. As to expression, mainly expressed in testis. Expressed to a lower level in thymus. Weakly or not expressed in heart, liver, brain, placenta, lung, skeletal muscle, kidney and pancreas.

It localises to the cytoplasm. Its subcellular location is the nucleus. Functionally, RNA-binding protein, which may be required during spermatogenesis. The sequence is that of DAZ-associated protein 1 (DAZAP1) from Homo sapiens (Human).